The chain runs to 129 residues: Fluoride-specific ion channel FluC (129 aa).

The next 4 helical transmembrane spans lie at 10 to 30, 35 to 55, 71 to 91, and 105 to 125; these read LLVGAGGFLGTVARYLVALAF, PGFPFATFSVNIAGSFLIGFL, LFLVTGFCGGFTTFSSYMFEG, and LYLAGSIVGGFVALYTGIIAA. Residues glycine 79 and threonine 82 each contribute to the Na(+) site.

This sequence belongs to the fluoride channel Fluc/FEX (TC 1.A.43) family.

The protein localises to the cell inner membrane. The catalysed reaction is fluoride(in) = fluoride(out). Na(+) is not transported, but it plays an essential structural role and its presence is essential for fluoride channel function. In terms of biological role, fluoride-specific ion channel. Important for reducing fluoride concentration in the cell, thus reducing its toxicity. In Chlorobium luteolum (strain DSM 273 / BCRC 81028 / 2530) (Pelodictyon luteolum), this protein is Fluoride-specific ion channel FluC.